The sequence spans 148 residues: Photosystem II extrinsic protein U, chloroplastic (148 aa).

A chloroplast-targeting transit peptide spans 1 to 32 (MKLAVFAVLISTVAAFVAPNGVQRAATTELNA). A thylakoid-targeting transit peptide spans 33–54 (ERREFLSAAAVAAGLAFPLTAN).

It belongs to the PsbU family. PSII is composed of 1 copy each of membrane proteins PsbA, PsbB, PsbC, PsbD, PsbE, PsbF, PsbH, PsbI, PsbJ, PsbK, PsbL, PsbM, PsbT, PsbX, PsbY, PsbZ, Psb30/Ycf12, at least 3 peripheral proteins of the oxygen-evolving complex and a large number of cofactors. It forms dimeric complexes. The oxygen-evolving complex may be composed of PsbO, PsbQ', PsbV and PsbU.

The protein resides in the plastid. Its subcellular location is the chloroplast thylakoid membrane. Functionally, one of the extrinsic, lumenal subunits of photosystem II (PSII), which stabilize and protect the oxygen-evolving complex. PSII is a light-driven water plastoquinone oxidoreductase, using light energy to abstract electrons from H(2)O, generating a proton gradient subsequently used for ATP formation. Stabilizes the structure of photosystem II oxygen-evolving complex (OEC), the ion environment of oxygen evolution and protects the OEC against heat-induced inactivation. The polypeptide is Photosystem II extrinsic protein U, chloroplastic (Phaeodactylum tricornutum (Diatom)).